The following is a 232-amino-acid chain: Phosphatidylserine decarboxylase proenzyme (232 aa).

Catalysis depends on Ser190, which acts as the Schiff-base intermediate with substrate; via pyruvic acid. Ser190 is modified (pyruvic acid (Ser); by autocatalysis).

Belongs to the phosphatidylserine decarboxylase family. PSD-A subfamily. Heterodimer of a large membrane-associated beta subunit and a small pyruvoyl-containing alpha subunit. It depends on pyruvate as a cofactor. Post-translationally, is synthesized initially as an inactive proenzyme. Formation of the active enzyme involves a self-maturation process in which the active site pyruvoyl group is generated from an internal serine residue via an autocatalytic post-translational modification. Two non-identical subunits are generated from the proenzyme in this reaction, and the pyruvate is formed at the N-terminus of the alpha chain, which is derived from the carboxyl end of the proenzyme. The post-translation cleavage follows an unusual pathway, termed non-hydrolytic serinolysis, in which the side chain hydroxyl group of the serine supplies its oxygen atom to form the C-terminus of the beta chain, while the remainder of the serine residue undergoes an oxidative deamination to produce ammonia and the pyruvoyl prosthetic group on the alpha chain.

It localises to the cell membrane. It carries out the reaction a 1,2-diacyl-sn-glycero-3-phospho-L-serine + H(+) = a 1,2-diacyl-sn-glycero-3-phosphoethanolamine + CO2. The protein operates within phospholipid metabolism; phosphatidylethanolamine biosynthesis; phosphatidylethanolamine from CDP-diacylglycerol: step 2/2. In terms of biological role, catalyzes the formation of phosphatidylethanolamine (PtdEtn) from phosphatidylserine (PtdSer). This is Phosphatidylserine decarboxylase proenzyme from Afipia carboxidovorans (strain ATCC 49405 / DSM 1227 / KCTC 32145 / OM5) (Oligotropha carboxidovorans).